Reading from the N-terminus, the 423-residue chain is L-cysteine:1D-myo-inositol 2-amino-2-deoxy-alpha-D-glucopyranoside ligase (423 aa).

Cys43 is a Zn(2+) binding site. Residues 43-46 (CGIT), Thr58, and 81-83 (NVT) each bind L-cysteinyl-5'-AMP. A 'HIGH' region motif is present at residues 45 to 55 (ITPYDATHMGH). A 'ERGGDP' region motif is present at residues 199 to 204 (ERGGDP). Trp240 contributes to the L-cysteinyl-5'-AMP binding site. Cys244 contacts Zn(2+). Position 262 to 264 (262 to 264 (GSD)) interacts with L-cysteinyl-5'-AMP. His269 contributes to the Zn(2+) binding site. Val295 is an L-cysteinyl-5'-AMP binding site. A 'KMSKS' region motif is present at residues 301 to 305 (KMSKS).

It belongs to the class-I aminoacyl-tRNA synthetase family. MshC subfamily. Monomer. It depends on Zn(2+) as a cofactor.

The catalysed reaction is 1D-myo-inositol 2-amino-2-deoxy-alpha-D-glucopyranoside + L-cysteine + ATP = 1D-myo-inositol 2-(L-cysteinylamino)-2-deoxy-alpha-D-glucopyranoside + AMP + diphosphate + H(+). Its function is as follows. Catalyzes the ATP-dependent condensation of GlcN-Ins and L-cysteine to form L-Cys-GlcN-Ins. The chain is L-cysteine:1D-myo-inositol 2-amino-2-deoxy-alpha-D-glucopyranoside ligase from Renibacterium salmoninarum (strain ATCC 33209 / DSM 20767 / JCM 11484 / NBRC 15589 / NCIMB 2235).